Consider the following 346-residue polypeptide: Methionine import ATP-binding protein MetN 1 (346 aa).

Residues 2–241 (IELKNVSKVF…PQHVTTKKFV (240 aa)) form the ABC transporter domain. 38 to 45 (GYSGAGKS) provides a ligand contact to ATP.

This sequence belongs to the ABC transporter superfamily. Methionine importer (TC 3.A.1.24) family. As to quaternary structure, the complex is composed of two ATP-binding proteins (MetN), two transmembrane proteins (MetI) and a solute-binding protein (MetQ).

The protein localises to the cell membrane. It catalyses the reaction L-methionine(out) + ATP + H2O = L-methionine(in) + ADP + phosphate + H(+). The catalysed reaction is D-methionine(out) + ATP + H2O = D-methionine(in) + ADP + phosphate + H(+). Its function is as follows. Part of the ABC transporter complex MetNIQ involved in methionine import. Responsible for energy coupling to the transport system. This chain is Methionine import ATP-binding protein MetN 1, found in Bacillus cereus (strain ATCC 10987 / NRS 248).